The sequence spans 517 residues: Cytochrome P450 52A8 (517 aa).

C464 lines the heme pocket.

This sequence belongs to the cytochrome P450 family. The cofactor is heme.

In terms of biological role, together with an NADPH cytochrome P450 the enzyme system catalyzes the terminal hydroxylation as the first step in the assimilation of alkanes and fatty acids. Preferentially hydroxylates lauric acid. The sequence is that of Cytochrome P450 52A8 (CYP52A8) from Candida tropicalis (Yeast).